The primary structure comprises 718 residues: K(+)-insensitive pyrophosphate-energized proton pump (718 aa).

The next 6 helical transmembrane spans lie at 6-26 (AVLVLVIACGVVSVLFAIWAI), 54-76 (LTRQYSTIAIVGVVVFLAAWYLL), 81-103 (AIGFLIGAVLSGVTGFIGMHVSV), 112-132 (AASLSLAGGLELAFKSGAITG), 133-153 (LLVAGLALLGVSVYYFILTVW), and 168-188 (VSLGFGASLISIFARLGGGIF). A substrate-binding site is contributed by Lys-190. Mg(2+) contacts are provided by Asp-193, Asp-197, Asn-220, and Asp-223. Transmembrane regions (helical) follow at residues 240 to 260 (AVTVVATMVLGAIFFNGSDIL), 265 to 285 (LYPLMICGACVITSIVGTFFV), 300 to 320 (GLIATGLLSIVGLAIANTLTV), 335 to 355 (GTNLFLCGLIGLIVTGLIVVI), 385 to 405 (GLAVSLESTALPAIVIVGGII), and 413 to 433 (LFGTAIAVTAMLGIAGMIVAL). Asp-441 is a Mg(2+) binding site. A run of 4 helical transmembrane segments spans residues 472–492 (AVTKGYAIGSAGLGALVLFAA), 524–544 (YVVAGLIFGGLIPYLFGGMAM), 593–613 (IIPSLLPVLAPIVVYFGVLLI), and 620–640 (AFAALGASLLGVIVNGLFVAI). 3 residues coordinate Ca(2+): Asp-650, Asp-682, and Asp-686. Lys-689 contributes to the substrate binding site. Residues 695–715 (AVNPAIKITNIVALLLLAVLA) traverse the membrane as a helical segment.

This sequence belongs to the H(+)-translocating pyrophosphatase (TC 3.A.10) family. K(+)-insensitive subfamily. As to quaternary structure, homodimer. It depends on Mg(2+) as a cofactor.

The protein localises to the cell inner membrane. It carries out the reaction diphosphate + H2O + H(+)(in) = 2 phosphate + 2 H(+)(out). Functionally, proton pump that utilizes the energy of pyrophosphate hydrolysis as the driving force for proton movement across the membrane. Generates a proton motive force. The chain is K(+)-insensitive pyrophosphate-energized proton pump from Brucella anthropi (strain ATCC 49188 / DSM 6882 / CCUG 24695 / JCM 21032 / LMG 3331 / NBRC 15819 / NCTC 12168 / Alc 37) (Ochrobactrum anthropi).